Reading from the N-terminus, the 178-residue chain is Inorganic pyrophosphatase (178 aa).

Lys-30, Arg-44, and Tyr-56 together coordinate substrate. Mg(2+) contacts are provided by Asp-66, Asp-71, and Asp-103. A substrate-binding site is contributed by Tyr-142.

It belongs to the PPase family. As to quaternary structure, homohexamer. Requires Mg(2+) as cofactor.

The protein localises to the cytoplasm. The catalysed reaction is diphosphate + H2O = 2 phosphate + H(+). In terms of biological role, catalyzes the hydrolysis of inorganic pyrophosphate (PPi) forming two phosphate ions. The sequence is that of Inorganic pyrophosphatase from Xylella fastidiosa (strain 9a5c).